Here is a 504-residue protein sequence, read N- to C-terminus: Apolipoprotein N-acyltransferase (504 aa).

A run of 6 helical transmembrane segments spans residues 6–26, 47–67, 83–103, 105–125, 153–173, and 186–206; these read LALT…YALV, ALYG…WVFV, LTAL…WLGV, AGGG…WVVT, IAPV…AGLL, and FALL…KVQW. In terms of domain architecture, CN hydrolase spans 219 to 457; the sequence is LQGNVPQDQK…REALTGMMQP (239 aa). The Proton acceptor role is filled by Glu258. Residue Lys317 is part of the active site. The active-site Nucleophile is Cys369. Residues 465 to 485 traverse the membrane as a helical segment; that stretch reads ALWGDWPAIGLCAGIVGICFA.

The protein belongs to the CN hydrolase family. Apolipoprotein N-acyltransferase subfamily.

The protein resides in the cell inner membrane. The catalysed reaction is N-terminal S-1,2-diacyl-sn-glyceryl-L-cysteinyl-[lipoprotein] + a glycerophospholipid = N-acyl-S-1,2-diacyl-sn-glyceryl-L-cysteinyl-[lipoprotein] + a 2-acyl-sn-glycero-3-phospholipid + H(+). It participates in protein modification; lipoprotein biosynthesis (N-acyl transfer). Its function is as follows. Catalyzes the phospholipid dependent N-acylation of the N-terminal cysteine of apolipoprotein, the last step in lipoprotein maturation. The sequence is that of Apolipoprotein N-acyltransferase from Methylococcus capsulatus (strain ATCC 33009 / NCIMB 11132 / Bath).